The following is a 59-amino-acid chain: Putative conotoxin (59 aa).

A signal peptide spans 1-25; sequence MGMRMMFTVFLLVVLATTVVPITLA. Positions 26–47 are excised as a propeptide; sequence SATDGRNAAANARVSPVISKSS.

This sequence belongs to the conotoxin A superfamily. In terms of tissue distribution, expressed by the venom duct.

It is found in the secreted. Functionally, acts as a neurotoxin. This Conus imperialis (Imperial cone) protein is Putative conotoxin.